Consider the following 493-residue polypeptide: Telomere-binding protein subunit alpha (493 aa).

The tract at residues 1–30 (MSSAKRSTSRVSKKKAAPAKDGAPKKREQS) is disordered. The segment covering 7–17 (STSRVSKKKAA) has biased composition (basic residues).

Belongs to the telombin family. In terms of assembly, heterodimer of an alpha and a beta subunit.

It localises to the nucleus. Its subcellular location is the chromosome. The protein resides in the telomere. May function as protective capping of the single-stranded telomeric overhang. May also participate in telomere length regulation during DNA replication. The protein is Telomere-binding protein subunit alpha (STY56V) of Stylonychia mytilus (Ciliate).